A 412-amino-acid polypeptide reads, in one-letter code: MQVYLVGGAVRDYLLGHPYQEKDYVVVGATPEHMLAQGFQPVGKDFPVFLHPETKEEYALARTERKSGQGYHGFQFFTDTTVSLEDDLIRRDLTINAIAMDQDGKIYDPYGGQNDLENKILRHVSEAFAEDPLRVLRVARFAARYFPYGFQIAPETLQLMQTMADSGELDALTPERVWKETSRALMENHADIYFQTLRNCGALKHLFPEIDALFGVPQRPEYHPEVDCGIHTLMSLQQACKSNYSLDVRFAVLVHDLGKALTPAEELPRHIMHEERGIKPVTQLCERLRVPTQTKQLALSVCKEHLKCHQIMSLKPGTLWRLLQRLDVLRRPERVEAFVQACECDAKGRLGLEDRPYPQAQYMREAMQIVRSIKVQDLPENIKGAEIGEMLIQYRIEALAEFKNQHQSLSHS.

Positions 8 and 11 each coordinate ATP. Positions 8 and 11 each coordinate CTP. Positions 21 and 23 each coordinate Mg(2+). ATP contacts are provided by arginine 91, arginine 137, and arginine 140. CTP-binding residues include arginine 91, arginine 137, and arginine 140. The 102-residue stretch at 228–329 folds into the HD domain; it reads CGIHTLMSLQ…WRLLQRLDVL (102 aa).

Belongs to the tRNA nucleotidyltransferase/poly(A) polymerase family. Bacterial CCA-adding enzyme type 1 subfamily. In terms of assembly, monomer. Can also form homodimers and oligomers. Mg(2+) is required as a cofactor. The cofactor is Ni(2+).

It carries out the reaction a tRNA precursor + 2 CTP + ATP = a tRNA with a 3' CCA end + 3 diphosphate. The catalysed reaction is a tRNA with a 3' CCA end + 2 CTP + ATP = a tRNA with a 3' CCACCA end + 3 diphosphate. In terms of biological role, catalyzes the addition and repair of the essential 3'-terminal CCA sequence in tRNAs without using a nucleic acid template. Adds these three nucleotides in the order of C, C, and A to the tRNA nucleotide-73, using CTP and ATP as substrates and producing inorganic pyrophosphate. tRNA 3'-terminal CCA addition is required both for tRNA processing and repair. Also involved in tRNA surveillance by mediating tandem CCA addition to generate a CCACCA at the 3' terminus of unstable tRNAs. While stable tRNAs receive only 3'-terminal CCA, unstable tRNAs are marked with CCACCA and rapidly degraded. This chain is Multifunctional CCA protein, found in Acinetobacter baumannii (strain ATCC 17978 / DSM 105126 / CIP 53.77 / LMG 1025 / NCDC KC755 / 5377).